The primary structure comprises 378 residues: Sperm microtubule associated protein 2 (378 aa).

Disordered stretches follow at residues 1 to 35 and 47 to 79; these read MGEL…SDGS and WLQS…LPEV. Residues 47 to 56 show a composition bias toward polar residues; sequence WLQSSQATTE. Residues 61–77 are compositionally biased toward acidic residues; sequence DPEEEIPPEEMVGEELP. 7 THEG repeats span residues 113 to 132, 179 to 198, 217 to 236, 253 to 272, 285 to 304, 321 to 340, and 355 to 374; these read AKCR…PKFN, TITV…PKRF, STLE…PKIR, AAQM…PRAP, PKPY…PKAL, VTKN…PKIR, and ASLV…PKHI. Ser-290 carries the phosphoserine modification.

Interacts with CCT5.

It localises to the nucleus. Its function is as follows. May be involved (but not essential) in spermatogenesis. This Rattus norvegicus (Rat) protein is Sperm microtubule associated protein 2.